Here is a 364-residue protein sequence, read N- to C-terminus: Heat-inducible transcription repressor HrcA (364 aa).

This sequence belongs to the HrcA family.

Its function is as follows. Negative regulator of class I heat shock genes (grpE-dnaK-dnaJ and groELS operons). Prevents heat-shock induction of these operons. The polypeptide is Heat-inducible transcription repressor HrcA (Cyanothece sp. (strain PCC 7425 / ATCC 29141)).